The sequence spans 197 residues: uncharacterized protein (197 aa).

Residues 11 to 31 (ICGFSLVALTIAGIVGGVYLV) form a helical membrane-spanning segment.

It is found in the membrane. This is an uncharacterized protein from Mycoplasma pneumoniae (strain ATCC 29342 / M129 / Subtype 1) (Mycoplasmoides pneumoniae).